The sequence spans 372 residues: Glutamate 5-kinase (372 aa).

An ATP-binding site is contributed by K14. The substrate site is built by S54, D141, and N153. ATP is bound by residues 173–174 (TD) and 215–221 (SGGMLTK). In terms of domain architecture, PUA spans 280–358 (AGKVVVDEGA…HEIEHILGYI (79 aa)).

It belongs to the glutamate 5-kinase family.

The protein resides in the cytoplasm. The catalysed reaction is L-glutamate + ATP = L-glutamyl 5-phosphate + ADP. Its pathway is amino-acid biosynthesis; L-proline biosynthesis; L-glutamate 5-semialdehyde from L-glutamate: step 1/2. Functionally, catalyzes the transfer of a phosphate group to glutamate to form L-glutamate 5-phosphate. The sequence is that of Glutamate 5-kinase from Methylobacillus flagellatus (strain ATCC 51484 / DSM 6875 / VKM B-1610 / KT).